A 200-amino-acid chain; its full sequence is Alpha-amylase/subtilisin inhibitor (200 aa).

The first 22 residues, 1–22 (MVSLRLPLILLSLLAISFSCSA), serve as a signal peptide directing secretion. 2 cysteine pairs are disulfide-bonded: cysteine 63/cysteine 112 and cysteine 162/cysteine 166.

This sequence belongs to the protease inhibitor I3 (leguminous Kunitz-type inhibitor) family.

Its function is as follows. This protein inhibits independently subtilisin and T.castaneum alpha-amylase but not barley alpha-amylase. The sequence is that of Alpha-amylase/subtilisin inhibitor (RASI) from Oryza sativa subsp. japonica (Rice).